The primary structure comprises 1149 residues: FH2 domain-containing protein 1 (1149 aa).

Disordered regions lie at residues 18–79 (LATA…PPPG), 464–540 (NHDR…SRLS), 554–660 (ESAT…PLLP), and 681–1149 (SPKS…PLQK). 2 stretches are compositionally biased toward pro residues: residues 33–48 (ASPP…PPCP) and 56–79 (PSPP…PPPG). Positions 88–483 (GYSSLGKKKR…QLQRQKEMEQ (396 aa)) constitute an FH2 domain. A compositionally biased stretch (basic and acidic residues) spans 464–485 (NHDREEQERKQLQRQKEMEQKR). The segment covering 486–504 (YSWSTGELGSFGRSSSEND) has biased composition (polar residues). Position 501 is a phosphoserine (S501). Low complexity predominate over residues 522 to 532 (PRPNSPSYRPP). 2 stretches are compositionally biased toward polar residues: residues 554 to 575 (ESAT…SSPR) and 591 to 604 (SHGP…QASK). 2 positions are modified to phosphoserine: S645 and S655. Over residues 681 to 693 (SPKSLEEGSQLTL) the composition is skewed to polar residues. Positions 784-795 (MDSRAGGDKQEE) are enriched in basic and acidic residues. Positions 801–822 (GSVSSGAGEAGSSQVSSNSVSS) are enriched in low complexity. Basic and acidic residues predominate over residues 844–856 (PKDRPSRGKDAIA). The span at 926-947 (ETPSSTDTPLSRRSSVRGTSDT) shows a compositional bias: polar residues. The tract at residues 960-1086 (EEPRLPRSSG…VKGGSEDSAS (127 aa)) is MTBD; microtubule-binding domain. The span at 965–974 (PRSSGSISGR) shows a compositional bias: low complexity. 2 stretches are compositionally biased toward polar residues: residues 1042-1052 (ARNTVASSSRS) and 1064-1074 (TGLTRTVSQRQ). The segment covering 1123–1134 (GTTERSSLRLKD) has biased composition (basic and acidic residues).

As to quaternary structure, interacts with CEP170. In terms of tissue distribution, brain, heart and lung (at protein level).

The protein localises to the golgi apparatus. It localises to the cell projection. Its subcellular location is the cilium. Microtubule-associated formin which regulates both actin and microtubule dynamics. Induces microtubule acetylation and stabilization and actin stress fiber formation. Regulates Golgi ribbon formation. Required for normal cilia assembly. Early in cilia assembly, may assist in the maturation and positioning of the centrosome/basal body, and once cilia assembly has initiated, may also promote cilia elongation by inhibiting disassembly. The protein is FH2 domain-containing protein 1 (Fhdc1) of Mus musculus (Mouse).